A 401-amino-acid chain; its full sequence is 3-sulfinopropanoyl-CoA desulfinase (401 aa).

FAD contacts are provided by residues 121-124 (ICIS), Ser130, and 153-156 (YWIT). 243–244 (YN) contributes to the substrate binding site. FAD contacts are provided by residues Arg272, Gln339, Ser343, 366–370 (GGTAQ), and Gln387.

This sequence belongs to the acyl-CoA dehydrogenase family. In terms of assembly, homotetramer. Requires FAD as cofactor.

It carries out the reaction 3-sulfinopropanoyl-CoA + H2O = propanoyl-CoA + sulfite + H(+). In terms of biological role, catalyzes the conversion 3-sulfinopropanoyl-CoA (3SP-CoA) to propanoyl-CoA by abstraction of sulfite. Does not show dehydrogenase activity. Involved in the degradation of 3,3'-dithiodipropionate (DTDP), a sulfur-containing precursor substrate for biosynthesis of polythioesters (PTEs). This Advenella mimigardefordensis (strain DSM 17166 / LMG 22922 / DPN7) protein is 3-sulfinopropanoyl-CoA desulfinase.